Here is a 114-residue protein sequence, read N- to C-terminus: Large ribosomal subunit protein uL22 (114 aa).

The protein belongs to the universal ribosomal protein uL22 family. As to quaternary structure, part of the 50S ribosomal subunit.

This protein binds specifically to 23S rRNA; its binding is stimulated by other ribosomal proteins, e.g. L4, L17, and L20. It is important during the early stages of 50S assembly. It makes multiple contacts with different domains of the 23S rRNA in the assembled 50S subunit and ribosome. Functionally, the globular domain of the protein is located near the polypeptide exit tunnel on the outside of the subunit, while an extended beta-hairpin is found that lines the wall of the exit tunnel in the center of the 70S ribosome. The polypeptide is Large ribosomal subunit protein uL22 (Desulfitobacterium hafniense (strain DSM 10664 / DCB-2)).